A 197-amino-acid chain; its full sequence is Probable low-affinity putrescine importer PlaP (197 aa).

A run of 5 helical transmembrane segments spans residues 33–53 (GVLIFSSVTVLASGTAAHAGV), 85–105 (VLLVXAIALLAIKLDLVTATA), 107–127 (INLGALVAFTFVNLSVISQFW), 140–160 (FNYLILPVCGALTVGALWINL), and 163–183 (SSMVLGLIWGGIGLVYXACVT).

The protein belongs to the amino acid-polyamine-organocation (APC) superfamily.

The protein localises to the cell inner membrane. It carries out the reaction putrescine(in) + H(+)(in) = putrescine(out) + H(+)(out). In terms of biological role, putrescine importer. The chain is Probable low-affinity putrescine importer PlaP (plaP) from Klebsiella pneumoniae.